Here is a 484-residue protein sequence, read N- to C-terminus: Protein nucleotidyltransferase YdiU (484 aa).

Residues glycine 81, glycine 83, arginine 84, lysine 103, aspartate 115, glycine 116, arginine 166, and arginine 173 each contribute to the ATP site. Aspartate 244 acts as the Proton acceptor in catalysis. Mg(2+) is bound by residues asparagine 245 and aspartate 254. Aspartate 254 contacts ATP.

This sequence belongs to the SELO family. The cofactor is Mg(2+). Mn(2+) is required as a cofactor.

The enzyme catalyses L-seryl-[protein] + ATP = 3-O-(5'-adenylyl)-L-seryl-[protein] + diphosphate. It catalyses the reaction L-threonyl-[protein] + ATP = 3-O-(5'-adenylyl)-L-threonyl-[protein] + diphosphate. The catalysed reaction is L-tyrosyl-[protein] + ATP = O-(5'-adenylyl)-L-tyrosyl-[protein] + diphosphate. It carries out the reaction L-histidyl-[protein] + UTP = N(tele)-(5'-uridylyl)-L-histidyl-[protein] + diphosphate. The enzyme catalyses L-seryl-[protein] + UTP = O-(5'-uridylyl)-L-seryl-[protein] + diphosphate. It catalyses the reaction L-tyrosyl-[protein] + UTP = O-(5'-uridylyl)-L-tyrosyl-[protein] + diphosphate. Functionally, nucleotidyltransferase involved in the post-translational modification of proteins. It can catalyze the addition of adenosine monophosphate (AMP) or uridine monophosphate (UMP) to a protein, resulting in modifications known as AMPylation and UMPylation. This chain is Protein nucleotidyltransferase YdiU, found in Shewanella baltica (strain OS185).